We begin with the raw amino-acid sequence, 310 residues long: tRNA dimethylallyltransferase (310 aa).

24–31 (GPTASGKT) contacts ATP. Substrate is bound at residue 26–31 (TASGKT). The interaction with substrate tRNA stretch occupies residues 49–52 (DSRQ).

This sequence belongs to the IPP transferase family. In terms of assembly, monomer. Mg(2+) serves as cofactor.

The catalysed reaction is adenosine(37) in tRNA + dimethylallyl diphosphate = N(6)-dimethylallyladenosine(37) in tRNA + diphosphate. Its function is as follows. Catalyzes the transfer of a dimethylallyl group onto the adenine at position 37 in tRNAs that read codons beginning with uridine, leading to the formation of N6-(dimethylallyl)adenosine (i(6)A). The chain is tRNA dimethylallyltransferase from Synechococcus sp. (strain CC9311).